Here is a 124-residue protein sequence, read N- to C-terminus: MEYEFRRNSLTGTFLASFSMDHEVLGQWFTEELGPELAKIQQVLDMIKEIQTDKRGAWRLVGNDFTLELEREQARVFANTLGFEQEYELEEAMSLYDAESEAYCGLEDFEQALLSWQTFIEKGL.

This sequence belongs to the UPF0231 family.

This is UPF0231 protein Sbal223_3655 from Shewanella baltica (strain OS223).